Consider the following 377-residue polypeptide: uncharacterized protein (377 aa).

The N-terminal stretch at 1-22 (MKFKYGTVVLGSFLGLSVVLAA) is a signal peptide. The N-palmitoyl cysteine moiety is linked to residue cysteine 23. Cysteine 23 carries the S-diacylglycerol cysteine lipid modification. The tract at residues 217-260 (AKANGETNQKGRKAAKSNKTALVQLKNGADTTTNEENKDTKTSD) is disordered. The segment covering 251 to 260 (EENKDTKTSD) has biased composition (basic and acidic residues).

This sequence belongs to the MG185/MG260 family.

The protein resides in the cell membrane. This is an uncharacterized protein from Mycoplasma pneumoniae (strain ATCC 29342 / M129 / Subtype 1) (Mycoplasmoides pneumoniae).